A 216-amino-acid chain; its full sequence is ATP phosphoribosyltransferase (216 aa).

This sequence belongs to the ATP phosphoribosyltransferase family. Short subfamily. In terms of assembly, heteromultimer composed of HisG and HisZ subunits.

The protein resides in the cytoplasm. The enzyme catalyses 1-(5-phospho-beta-D-ribosyl)-ATP + diphosphate = 5-phospho-alpha-D-ribose 1-diphosphate + ATP. The protein operates within amino-acid biosynthesis; L-histidine biosynthesis; L-histidine from 5-phospho-alpha-D-ribose 1-diphosphate: step 1/9. Catalyzes the condensation of ATP and 5-phosphoribose 1-diphosphate to form N'-(5'-phosphoribosyl)-ATP (PR-ATP). Has a crucial role in the pathway because the rate of histidine biosynthesis seems to be controlled primarily by regulation of HisG enzymatic activity. This chain is ATP phosphoribosyltransferase, found in Nitrosomonas europaea (strain ATCC 19718 / CIP 103999 / KCTC 2705 / NBRC 14298).